Consider the following 315-residue polypeptide: Homoserine kinase (315 aa).

Residue 97–107 (PPARGLGSSAT) coordinates ATP.

It belongs to the GHMP kinase family. Homoserine kinase subfamily.

It is found in the cytoplasm. The catalysed reaction is L-homoserine + ATP = O-phospho-L-homoserine + ADP + H(+). Its pathway is amino-acid biosynthesis; L-threonine biosynthesis; L-threonine from L-aspartate: step 4/5. Its function is as follows. Catalyzes the ATP-dependent phosphorylation of L-homoserine to L-homoserine phosphate. This chain is Homoserine kinase, found in Prochlorococcus marinus (strain NATL2A).